Here is a 175-residue protein sequence, read N- to C-terminus: Large ribosomal subunit protein uL15 (175 aa).

A compositionally biased stretch (basic and acidic residues) spans 1 to 13 (MTIKLNELRDNNG). Disordered regions lie at residues 1–44 (MTIK…KARS) and 150–175 (VELP…AKNA). A compositionally biased stretch (gly residues) spans 23–37 (RGIGSGKGKTAGRGQ).

This sequence belongs to the universal ribosomal protein uL15 family. Part of the 50S ribosomal subunit.

Functionally, binds to the 23S rRNA. This Sphingopyxis alaskensis (strain DSM 13593 / LMG 18877 / RB2256) (Sphingomonas alaskensis) protein is Large ribosomal subunit protein uL15.